A 206-amino-acid chain; its full sequence is Threonine efflux protein (206 aa).

The chain crosses the membrane as a helical span at residues 1 to 21 (MLMLFLTVAMVHIVALMSPGP). Residues 22 to 43 (DFFFVSQTAVSRSRKEAMMGVL) are Periplasmic-facing. Residues 44–64 (GITCGVMVWAGIALLGLHLII) form a helical membrane-spanning segment. Residues 65-66 (EK) lie on the Cytoplasmic side of the membrane. Residues 67–87 (MAWLHTLIMVGGGLYLCWMGY) traverse the membrane as a helical segment. The Periplasmic portion of the chain corresponds to 88–149 (QMLRGALKKE…VGDNVGTTAR (62 aa)). The helical transmembrane segment at 150 to 173 (WGIFALIIVETLAWFTVVASLFAL) threads the bilayer. Topologically, residues 174–206 (PQMRRGYQRLAKWIDGFAGALFAGFGIHLIISR) are cytoplasmic.

It belongs to the Rht family.

It localises to the cell inner membrane. Its function is as follows. Conducts the efflux of threonine. This chain is Threonine efflux protein (rhtC), found in Escherichia coli O157:H7.